Reading from the N-terminus, the 514-residue chain is Respiratory nitrate reductase 2 beta chain (514 aa).

4Fe-4S ferredoxin-type domains follow at residues 7–35 (VGMV…GREG), 174–205 (TFMM…KREE), and 207–236 (GIVL…FNWK). Residues Cys-16, Cys-19, Cys-22, Cys-26, Cys-183, Cys-186, and Cys-191 each coordinate [4Fe-4S] cluster. Cys-195, Cys-216, and Cys-222 together coordinate [3Fe-4S] cluster. Cys-226, Cys-243, Cys-246, Cys-258, and Cys-262 together coordinate [4Fe-4S] cluster.

Dimer of heterotrimers each composed of an alpha, a beta and a gamma chain. Alpha and beta are catalytic chains; gamma chains are involved in binding the enzyme complex to the cytoplasmic membrane. Requires [4Fe-4S] cluster as cofactor. It depends on [3Fe-4S] cluster as a cofactor.

It is found in the cell membrane. It catalyses the reaction nitrate + a quinol = a quinone + nitrite + H2O. Functionally, this is a second nitrate reductase enzyme which can substitute for the NRA enzyme and allows E.coli to use nitrate as an electron acceptor during anaerobic growth. The beta chain is an electron transfer unit containing four cysteine clusters involved in the formation of iron-sulfur centers. Electrons are transferred from the gamma chain to the molybdenum cofactor of the alpha subunit. The protein is Respiratory nitrate reductase 2 beta chain (narY) of Escherichia coli (strain K12).